Reading from the N-terminus, the 543-residue chain is Glutamyl-tRNA(Gln) amidotransferase subunit A, chloroplastic/mitochondrial (543 aa).

Catalysis depends on charge relay system residues Lys123 and Ser198. Ser222 serves as the catalytic Acyl-ester intermediate.

The protein belongs to the amidase family. GatA subfamily. In terms of assembly, subunit of the heterotrimeric GatCAB amidotransferase (AdT) complex, composed of A, B and C subunits.

Its subcellular location is the mitochondrion. It localises to the plastid. The protein localises to the chloroplast stroma. It carries out the reaction L-glutamyl-tRNA(Gln) + L-glutamine + ATP + H2O = L-glutaminyl-tRNA(Gln) + L-glutamate + ADP + phosphate + H(+). In terms of biological role, allows the formation of correctly charged Gln-tRNA(Gln) through the transamidation of misacylated Glu-tRNA(Gln) in chloroplasts and mitochondria. The reaction takes place in the presence of glutamine and ATP through an activated gamma-phospho-Glu-tRNA(Gln). This chain is Glutamyl-tRNA(Gln) amidotransferase subunit A, chloroplastic/mitochondrial, found in Oryza sativa subsp. indica (Rice).